The primary structure comprises 581 residues: NADH-quinone oxidoreductase subunit C/D (581 aa).

Positions Met1 to Phe172 are NADH dehydrogenase I subunit C. The interval Glu196–Arg581 is NADH dehydrogenase I subunit D.

It in the N-terminal section; belongs to the complex I 30 kDa subunit family. This sequence in the C-terminal section; belongs to the complex I 49 kDa subunit family. NDH-1 is composed of 13 different subunits. Subunits NuoB, CD, E, F, and G constitute the peripheral sector of the complex.

Its subcellular location is the cell inner membrane. The catalysed reaction is a quinone + NADH + 5 H(+)(in) = a quinol + NAD(+) + 4 H(+)(out). Functionally, NDH-1 shuttles electrons from NADH, via FMN and iron-sulfur (Fe-S) centers, to quinones in the respiratory chain. The immediate electron acceptor for the enzyme in this species is believed to be ubiquinone. Couples the redox reaction to proton translocation (for every two electrons transferred, four hydrogen ions are translocated across the cytoplasmic membrane), and thus conserves the redox energy in a proton gradient. The chain is NADH-quinone oxidoreductase subunit C/D from Rhodopseudomonas palustris (strain BisB5).